Here is a 153-residue protein sequence, read N- to C-terminus: Fimbrial protein EcpC (153 aa).

Positions 1 to 8 are cleaved as a propeptide — leader sequence; that stretch reads MLKQVQKG. Residue Phe9 is modified to N-methylphenylalanine. The helical transmembrane segment at 9–29 threads the bilayer; the sequence is FTLIELMIVIAIIGILAAIAL. A disulfide bridge links Cys130 with Cys143.

The protein belongs to the N-Me-Phe pilin family.

It is found in the fimbrium. The protein resides in the membrane. In Eikenella corrodens, this protein is Fimbrial protein EcpC (ecpC).